The chain runs to 262 residues: Indole-3-glycerol phosphate synthase (262 aa).

It belongs to the TrpC family.

It carries out the reaction 1-(2-carboxyphenylamino)-1-deoxy-D-ribulose 5-phosphate + H(+) = (1S,2R)-1-C-(indol-3-yl)glycerol 3-phosphate + CO2 + H2O. The protein operates within amino-acid biosynthesis; L-tryptophan biosynthesis; L-tryptophan from chorismate: step 4/5. The protein is Indole-3-glycerol phosphate synthase of Clostridium kluyveri (strain NBRC 12016).